A 122-amino-acid polypeptide reads, in one-letter code: Acidic phospholipase A2 CbIalpha (122 aa).

7 disulfide bridges follow: Cys-26-Cys-115, Cys-28-Cys-44, Cys-43-Cys-95, Cys-49-Cys-122, Cys-50-Cys-88, Cys-57-Cys-81, and Cys-75-Cys-86. Residues Tyr-27, Gly-29, and Gly-31 each contribute to the Ca(2+) site. His-47 is a catalytic residue. Position 48 (Asp-48) interacts with Ca(2+). Residue Asp-89 is part of the active site.

It belongs to the phospholipase A2 family. Group II subfamily. D49 sub-subfamily. In terms of assembly, heterodimer of an acidic subunit (CbIalpha or CbIbeta) and a basic subunit (CbII). The acidic subunit is non-toxic, and increases the toxicity of the basic subunit. Ca(2+) serves as cofactor. Expressed by the venom gland.

The protein resides in the secreted. The enzyme catalyses a 1,2-diacyl-sn-glycero-3-phosphocholine + H2O = a 1-acyl-sn-glycero-3-phosphocholine + a fatty acid + H(+). In terms of biological role, heterodimer: presynaptic neurotoxin. Its function is as follows. Monomer: Snake venom phospholipase A2 (PLA2) is inactive towards micellar phosphatidylcholine but is weakly active towards non-micellar dithiolecithin. PLA2 catalyzes the calcium-dependent hydrolysis of the 2-acyl groups in 3-sn-phosphoglycerides. In Pseudocerastes fieldi (Field's horned viper), this protein is Acidic phospholipase A2 CbIalpha.